Reading from the N-terminus, the 772-residue chain is Protein transport protein SEC23 F (772 aa).

Zn(2+)-binding residues include Cys65, Cys68, Cys87, and Cys90. The interval 65–90 is zinc finger-like; that stretch reads CKTCKALLNAFARVDFAAMNWVCPFC.

This sequence belongs to the SEC23/SEC24 family. SEC23 subfamily. As to quaternary structure, component of the coat protein complex II (COPII), composed of at least five proteins: the Sec23/24 complex, the Sec13/31 complex and Sar1. Interacts with SEC24A.

It is found in the cytoplasmic vesicle. The protein localises to the COPII-coated vesicle membrane. It localises to the endoplasmic reticulum membrane. Its subcellular location is the membrane. In terms of biological role, component of the coat protein complex II (COPII) which promotes the formation of transport vesicles from the endoplasmic reticulum (ER). The coat has two main functions, the physical deformation of the endoplasmic reticulum membrane into vesicles and the selection of cargo molecules. This is Protein transport protein SEC23 F from Arabidopsis thaliana (Mouse-ear cress).